The sequence spans 175 residues: Putative lipoprotein LppN (175 aa).

Residues 1–20 form the signal peptide; that stretch reads MRLPGRHVLYALSAVTMLAA. A lipid anchor (N-palmitoyl cysteine) is attached at cysteine 21. Cysteine 21 is lipidated: S-diacylglycerol cysteine. A disordered region spans residues 31-56; the sequence is ASTNMNPTNPPATAETATVSPTPAPQ. Residues 33–48 are compositionally biased toward low complexity; sequence TNMNPTNPPATAETAT. Prevents bacterial uptake by a human macrophage-like cell line stretches follow at residues 61–80, 101–120, and 121–140; these read ETWINLQVGDCLADLPPADL, RAPVAVDAAVVSMANRDCAA, and GFAPYTGQSVDTSPYSVAYL.

It is found in the cell membrane. It localises to the cell surface. Probably involved in bacterial recognition and uptake by its host (human). This Mycobacterium tuberculosis (strain ATCC 25618 / H37Rv) protein is Putative lipoprotein LppN (lppN).